A 292-amino-acid polypeptide reads, in one-letter code: ATP synthase gamma chain (292 aa).

The protein belongs to the ATPase gamma chain family. F-type ATPases have 2 components, CF(1) - the catalytic core - and CF(0) - the membrane proton channel. CF(1) has five subunits: alpha(3), beta(3), gamma(1), delta(1), epsilon(1). CF(0) has three main subunits: a, b and c.

The protein resides in the cell inner membrane. Its function is as follows. Produces ATP from ADP in the presence of a proton gradient across the membrane. The gamma chain is believed to be important in regulating ATPase activity and the flow of protons through the CF(0) complex. The protein is ATP synthase gamma chain of Methylobacterium nodulans (strain LMG 21967 / CNCM I-2342 / ORS 2060).